The following is an 89-amino-acid chain: Acylphosphatase (89 aa).

Residues 3–89 (RMTAWVHGFV…RGDLTGFVER (87 aa)) form the Acylphosphatase-like domain. Active-site residues include R18 and N36.

This sequence belongs to the acylphosphatase family.

It carries out the reaction an acyl phosphate + H2O = a carboxylate + phosphate + H(+). This is Acylphosphatase (acyP) from Rhodococcus jostii (strain RHA1).